Consider the following 261-residue polypeptide: MRVALGIEYDGSRYYGWQRQLDVDSVQGQLEKALSKVANEPITVQCAGRTDTGVHGTGQVVHFDTNAIRKETAWTLGVNVNLPDDIAVRWVKVVDEEFHARFSATARRYRYMIYNHQLRPGILRSGVSHYRGNIDEDKMHQAAQLFVGEHDFTSFRALQCQSKTPFREIHEVNVTRQGMYICVDIKANAFLHHMVRNIVGTLLEIGKGNQPKEWVNTLLALKDRSKAAATAQPNGLYLVDVTYPEHFQLPKLALGPLFMLD.

The Nucleophile role is filled by D51. Y109 lines the substrate pocket.

The protein belongs to the tRNA pseudouridine synthase TruA family. As to quaternary structure, homodimer.

It catalyses the reaction uridine(38/39/40) in tRNA = pseudouridine(38/39/40) in tRNA. Functionally, formation of pseudouridine at positions 38, 39 and 40 in the anticodon stem and loop of transfer RNAs. This chain is tRNA pseudouridine synthase A, found in Shewanella piezotolerans (strain WP3 / JCM 13877).